The following is a 439-amino-acid chain: Perilipin-3 (439 aa).

Low complexity predominate over residues 1-19 (MFASETEASASSTQVTTEE). The tract at residues 1 to 26 (MFASETEASASSTQVTTEEPVQQPSV) is disordered. Position 66 is an N6-acetyllysine (Lys-66). Ser-92 bears the Phosphoserine mark. Lys-123 is covalently cross-linked (Glycyl lysine isopeptide (Lys-Gly) (interchain with G-Cter in SUMO1)). A Phosphoserine modification is found at Ser-131. Thr-175 carries the post-translational modification Phosphothreonine. A phosphoserine mark is found at Ser-180 and Ser-184. Position 221 is a phosphothreonine (Thr-221). Phosphoserine is present on residues Ser-222 and Ser-246. Coiled-coil stretches lie at residues 254 to 282 (RAYE…QALS) and 358 to 381 (AHVK…FSGM). Residue Tyr-256 is modified to Phosphotyrosine.

It belongs to the perilipin family. As to quaternary structure, homooligomer. Interacts with M6PR (via the cytoplasmic domain). Interacts with IGF2R (via the cytoplasmic domain). Post-translationally, phosphorylation at Tyr-256 by isoform 1 of CHKA (CHKalpha2) promotes dissociation from lipid droplets: dissociation is followed by recruitment of autophagosome machinery to lipid droplets and subsequent lipid droplet lipolysis.

The protein localises to the lipid droplet. Its subcellular location is the endosome membrane. The protein resides in the cytoplasm. Structural component of lipid droplets, which is required for the formation and maintenance of lipid storage droplets. Required for the transport of mannose 6-phosphate receptors (MPR) from endosomes to the trans-Golgi network. The protein is Perilipin-3 (PLIN3) of Sus scrofa (Pig).